We begin with the raw amino-acid sequence, 528 residues long: Probable serine protease HtrA1 (528 aa).

Residues Met1–Val70 are disordered. Residues Met1 to Tyr178 lie on the Cytoplasmic side of the membrane. The segment covering Asn31–Arg40 has biased composition (gly residues). A helical transmembrane segment spans residues Leu179–Gly199. Over Arg200 to Thr528 the chain is Periplasmic. Catalysis depends on charge relay system residues His270, Asp306, and Ser387. One can recognise a PDZ domain in the interval Leu426–Val487.

Belongs to the peptidase S1C family. In terms of assembly, the C-terminal region exhibits both monomeric and trimeric forms in solution.

Its subcellular location is the cell inner membrane. It carries out the reaction Acts on substrates that are at least partially unfolded. The cleavage site P1 residue is normally between a pair of hydrophobic residues, such as Val-|-Val.. Functionally, essential protein that may act as a regulatory protease that is conditionally activated upon appropriate environmental triggers. The polypeptide is Probable serine protease HtrA1 (Mycobacterium tuberculosis (strain ATCC 25618 / H37Rv)).